Consider the following 264-residue polypeptide: U1 snRNP-associated protein usp106 (264 aa).

Residues 83–126 (DYLEDLERHVDDCNKRIDIAEARREKTKEEEERIDELMRDIIHT) adopt a coiled-coil conformation. The segment covering 233–258 (EDREKSRDKKDGEKQRDNLASFEDKI) has biased composition (basic and acidic residues). Positions 233–264 (EDREKSRDKKDGEKQRDNLASFEDKISTSFVA) are disordered.

Belongs to the Luc7 family. As to quaternary structure, component of the U1 snRNP particle, a subcomplex of the spliceosome.

The protein localises to the cytoplasm. It localises to the nucleus. Functionally, component of the U1 snRNP particle, which recognizes and binds the 5'-splice site of pre-mRNA. Together with other non-snRNP factors, U1 snRNP forms the spliceosomal commitment complex, that targets pre-mRNA to the splicing pathway. The polypeptide is U1 snRNP-associated protein usp106 (usp106) (Schizosaccharomyces pombe (strain 972 / ATCC 24843) (Fission yeast)).